Consider the following 33-residue polypeptide: Protein YdgV (33 aa).

This Escherichia coli (strain K12) protein is Protein YdgV.